A 507-amino-acid chain; its full sequence is ATP synthase subunit alpha, chloroplastic (507 aa).

Position 170 to 177 (170 to 177 (GDRQTGKT)) interacts with ATP. At Thr-257 the chain carries Phosphothreonine.

The protein belongs to the ATPase alpha/beta chains family. In terms of assembly, F-type ATPases have 2 components, CF(1) - the catalytic core - and CF(0) - the membrane proton channel. CF(1) has five subunits: alpha(3), beta(3), gamma(1), delta(1), epsilon(1). CF(0) has four main subunits: a, b, b' and c.

The protein localises to the plastid. Its subcellular location is the chloroplast thylakoid membrane. It carries out the reaction ATP + H2O + 4 H(+)(in) = ADP + phosphate + 5 H(+)(out). Its function is as follows. Produces ATP from ADP in the presence of a proton gradient across the membrane. The alpha chain is a regulatory subunit. The sequence is that of ATP synthase subunit alpha, chloroplastic from Crucihimalaya wallichii (Rock-cress).